The primary structure comprises 144 residues: MSHKILLVNGPNLNLLGRREPSVYGHQTLADIVATLNQQAQQAGVELEHIQSNAEFELINAIHATDAQMIIINPAAFTHTSVALRDAMLGVAIPFFEVHLSNVHAREAFRHHSYFSDKAIGVICGFGAQGYEFALSAAIKQLKG.

Residue tyrosine 24 is the Proton acceptor of the active site. Substrate contacts are provided by asparagine 73, histidine 79, and aspartate 86. Histidine 99 functions as the Proton donor in the catalytic mechanism. Residues 100-101 (LS) and arginine 110 each bind substrate.

It belongs to the type-II 3-dehydroquinase family. In terms of assembly, homododecamer.

The enzyme catalyses 3-dehydroquinate = 3-dehydroshikimate + H2O. Its pathway is metabolic intermediate biosynthesis; chorismate biosynthesis; chorismate from D-erythrose 4-phosphate and phosphoenolpyruvate: step 3/7. Catalyzes a trans-dehydration via an enolate intermediate. The protein is 3-dehydroquinate dehydratase of Shewanella putrefaciens (strain CN-32 / ATCC BAA-453).